Consider the following 636-residue polypeptide: Threonine--tRNA ligase (636 aa).

The TGS domain maps to 1-60 (MPIINFNNKEILFNYPISIIEIIKKFDKNLSENCIAAKINGKLLDVSEIINYDGSLELVK). Positions 242 to 533 (DHRKIGKKLD…ITEEFSGKYP (292 aa)) are catalytic. Zn(2+) contacts are provided by cysteine 333, histidine 384, and histidine 510.

Belongs to the class-II aminoacyl-tRNA synthetase family. In terms of assembly, homodimer. It depends on Zn(2+) as a cofactor.

It localises to the cytoplasm. It catalyses the reaction tRNA(Thr) + L-threonine + ATP = L-threonyl-tRNA(Thr) + AMP + diphosphate + H(+). Functionally, catalyzes the attachment of threonine to tRNA(Thr) in a two-step reaction: L-threonine is first activated by ATP to form Thr-AMP and then transferred to the acceptor end of tRNA(Thr). Also edits incorrectly charged L-seryl-tRNA(Thr). This is Threonine--tRNA ligase from Wigglesworthia glossinidia brevipalpis.